The primary structure comprises 492 residues: MLCLRRRTQIANPMINAVGETAEQAVKKLEKVFEVLKDRNERFPLTEISKQIDVIWESVFSVTHATAPQKKYELAEEFLNHPGVVKNLLMVFDGVQVETKRKIRDLLIFIRTWTSNDFLADAEGSLVPNPRQARPSQKFQDVLYECRFIMLHIVHEGYAGSDSIGLYNDIIRIFAEDDACLMFMLKDKGTDSNEVKQKFEGCVWAIFDRLFNTHTYRGFHILAEIFETFEIIFSQNHEASQYFFYNNLSRFSQSFHWLIAANNFFIQTKSLRFVRDIFSNRYMAEVRRQWMADPSLIKYVFLHLQSIHKTVCLEAVGLLNIFVQNPCNAPPIHKLISINRKLLLEYCRQNAPNPKDENQALDELFDETITYLVNWNEEEPAHEPTAQDTLKMRSIKLKMRREHTLELVQNEIPLFPRNNLLPTSPRQSSFVYNRRLPRVSSSRAGIRFGETRNVKGSPRSRSQSPRPPTGPEPSPRTTSYQNVRFPPEDSSR.

The segment at 442–492 (SRAGIRFGETRNVKGSPRSRSQSPRPPTGPEPSPRTTSYQNVRFPPEDSSR) is disordered. Over residues 465–474 (PRPPTGPEPS) the composition is skewed to pro residues.

The protein belongs to the Mo25 family.

This Caenorhabditis briggsae protein is MO25-like protein 3.